A 507-amino-acid chain; its full sequence is ATP synthase subunit alpha, chloroplastic (507 aa).

170 to 177 (GDRQTGKT) serves as a coordination point for ATP.

The protein belongs to the ATPase alpha/beta chains family. F-type ATPases have 2 components, CF(1) - the catalytic core - and CF(0) - the membrane proton channel. CF(1) has five subunits: alpha(3), beta(3), gamma(1), delta(1), epsilon(1). CF(0) has four main subunits: a, b, b' and c.

Its subcellular location is the plastid. The protein resides in the chloroplast thylakoid membrane. It catalyses the reaction ATP + H2O + 4 H(+)(in) = ADP + phosphate + 5 H(+)(out). Its function is as follows. Produces ATP from ADP in the presence of a proton gradient across the membrane. The alpha chain is a regulatory subunit. In Populus alba (White poplar), this protein is ATP synthase subunit alpha, chloroplastic.